A 207-amino-acid polypeptide reads, in one-letter code: Suppressor of IKBKE 1 (207 aa).

Coiled coils occupy residues 70–102 and 162–193; these read HILLSQENTQIRDLQQENRELWISLEEHQDALE and QFCKIQEKLAQLELENKELRELLSISSESLQA.

It belongs to the SIKE family. As to quaternary structure, interacts with IKBKE and TBK1 via its coiled coil region. Interaction with TBK1 is disrupted upon viral infection or TLR3 stimulation. Interacts with CDC42BPB. Interacts with SIKE1 which mediates association with the STRIPAK core complex composed of PP2A catalytic and scaffolding subunits, the striatins (PP2A regulatory subunits), the striatin-associated proteins MOB4, STRIP1 and STRIP2, PDCD10 and members of the STE20 kinases, such as STK24 and STK26. As to expression, widely expressed. Expressed in brain, heart, skeletal muscle, colon, thymus, spleen, kidney, liver, small intestine, placenta, lung and leukocytes. Present in all cell lines tested (at protein level).

It localises to the cytoplasm. Functionally, physiological suppressor of IKK-epsilon and TBK1 that plays an inhibitory role in virus- and TLR3-triggered IRF3. Inhibits TLR3-mediated activation of interferon-stimulated response elements (ISRE) and the IFN-beta promoter. May act by disrupting the interactions of IKBKE or TBK1 with TICAM1/TRIF, IRF3 and RIGI. Does not inhibit NF-kappa-B activation pathways. Associates with the striatin-interacting phosphatase and kinase (STRIPAK) core complex, forming the extended (SIKE1:SLMAP)STRIPAK complex. The (SIKE1:SLMAP)STRIPAK complex dephosphorylates STK3 leading to the inhibition of Hippo signaling and the control of cell growth. The chain is Suppressor of IKBKE 1 from Homo sapiens (Human).